Consider the following 217-residue polypeptide: 3,4-dihydroxy-2-butanone 4-phosphate synthase (217 aa).

Residues 37–38 (RE), aspartate 42, 150–154 (RRGHT), and glutamate 174 each bind D-ribulose 5-phosphate. Glutamate 38 contacts Mg(2+). Histidine 153 serves as a coordination point for Mg(2+).

The protein belongs to the DHBP synthase family. As to quaternary structure, homodimer. It depends on Mg(2+) as a cofactor. The cofactor is Mn(2+).

The enzyme catalyses D-ribulose 5-phosphate = (2S)-2-hydroxy-3-oxobutyl phosphate + formate + H(+). It participates in cofactor biosynthesis; riboflavin biosynthesis; 2-hydroxy-3-oxobutyl phosphate from D-ribulose 5-phosphate: step 1/1. Functionally, catalyzes the conversion of D-ribulose 5-phosphate to formate and 3,4-dihydroxy-2-butanone 4-phosphate. In Shewanella loihica (strain ATCC BAA-1088 / PV-4), this protein is 3,4-dihydroxy-2-butanone 4-phosphate synthase.